A 230-amino-acid chain; its full sequence is Oxygen-evolving enhancer protein 3-2, chloroplastic (230 aa).

Residues 1 to 49 (MAQAVTSMAGLRGASQAVLEGSLQINGSNRLNISRVSVGSQRTGLVIRA) constitute a chloroplast transit peptide. A thylakoid-targeting transit peptide spans 50–82 (QQNVSVPESSRRSVIGLVAAGLAGGSFVKAVFA). Position 125 is a phosphoserine (Ser125). Thr195 is subject to Phosphothreonine. Tyr215 carries the phosphotyrosine modification. Ser216 is modified (phosphoserine). Thr218 is modified (phosphothreonine).

Belongs to the PsbQ family.

It is found in the plastid. The protein localises to the chloroplast thylakoid membrane. Its function is as follows. Required for photosystem II assembly/stability and photoautotrophic growth under low light conditions. This is Oxygen-evolving enhancer protein 3-2, chloroplastic (PSBQ2) from Arabidopsis thaliana (Mouse-ear cress).